Here is a 76-residue protein sequence, read N- to C-terminus: Large ribosomal subunit protein bL31 (76 aa).

Zn(2+) is bound by residues Cys-16, Cys-18, Cys-36, and Cys-39.

This sequence belongs to the bacterial ribosomal protein bL31 family. Type A subfamily. In terms of assembly, part of the 50S ribosomal subunit. It depends on Zn(2+) as a cofactor.

Binds the 23S rRNA. The chain is Large ribosomal subunit protein bL31 from Syntrophobacter fumaroxidans (strain DSM 10017 / MPOB).